A 38-amino-acid chain; its full sequence is Photosystem II reaction center protein Y (38 aa).

Residues 1-4 lie on the Lumenal side of the membrane; that stretch reads MSMR. The helical transmembrane segment at 5–23 threads the bilayer; that stretch reads LVVVLLPLGIALGWAVYNI. Residues 24–38 lie on the Stromal side of the membrane; it reads GKLAIEQWRRTGSKV.

Belongs to the PsbY family. As to quaternary structure, PSII is composed of 1 copy each of membrane proteins PsbA, PsbB, PsbC, PsbD, PsbE, PsbF, PsbH, PsbI, PsbJ, PsbK, PsbL, PsbM, PsbT, PsbX, PsbY, PsbZ, Psb30/Ycf12, at least 3 peripheral proteins of the oxygen-evolving complex and a large number of cofactors. It forms dimeric complexes.

The protein localises to the plastid. Its subcellular location is the cyanelle thylakoid membrane. Functionally, loosely associated component of the core of photosystem II (PSII), it is not always seen in crystals. PSII is a light-driven water plastoquinone oxidoreductase, using light energy to abstract electrons from H(2)O, generating a proton gradient subsequently used for ATP formation. In Cyanophora paradoxa, this protein is Photosystem II reaction center protein Y.